A 287-amino-acid chain; its full sequence is ATP synthase gamma chain (287 aa).

It belongs to the ATPase gamma chain family. In terms of assembly, F-type ATPases have 2 components, CF(1) - the catalytic core - and CF(0) - the membrane proton channel. CF(1) has five subunits: alpha(3), beta(3), gamma(1), delta(1), epsilon(1). CF(0) has three main subunits: a, b and c.

It is found in the cell inner membrane. Functionally, produces ATP from ADP in the presence of a proton gradient across the membrane. The gamma chain is believed to be important in regulating ATPase activity and the flow of protons through the CF(0) complex. The sequence is that of ATP synthase gamma chain from Escherichia fergusonii (strain ATCC 35469 / DSM 13698 / CCUG 18766 / IAM 14443 / JCM 21226 / LMG 7866 / NBRC 102419 / NCTC 12128 / CDC 0568-73).